The primary structure comprises 214 residues: Cytochrome b (214 aa).

4 consecutive transmembrane segments (helical) span residues 31–51, 75–96, 111–131, and 176–196; these read FGSM…FLAI, WIMQ…YTHI, WLSG…GYVL, and FFAL…IHIL. Heme b contacts are provided by H81 and H95. Heme b is bound by residues H180 and H194. A ubiquinone is bound at residue H199.

This sequence belongs to the cytochrome b family. In terms of assembly, the cytochrome bc1 complex contains 3 respiratory subunits (MT-CYB, CYC1 and UQCRFS1), 2 core proteins (UQCRC1 and UQCRC2) and probably 6 low-molecular weight proteins. It depends on heme b as a cofactor.

The protein localises to the mitochondrion inner membrane. Component of the ubiquinol-cytochrome c reductase complex (complex III or cytochrome b-c1 complex) that is part of the mitochondrial respiratory chain. The b-c1 complex mediates electron transfer from ubiquinol to cytochrome c. Contributes to the generation of a proton gradient across the mitochondrial membrane that is then used for ATP synthesis. The chain is Cytochrome b (MT-CYB) from Lachesis muta muta (Bushmaster).